A 136-amino-acid chain; its full sequence is Ribonuclease P protein component (136 aa).

The disordered stretch occupies residues 39 to 59 (LPDVSSSKPARDTGAEQTSAP).

This sequence belongs to the RnpA family. Consists of a catalytic RNA component (M1 or rnpB) and a protein subunit.

It catalyses the reaction Endonucleolytic cleavage of RNA, removing 5'-extranucleotides from tRNA precursor.. Functionally, RNaseP catalyzes the removal of the 5'-leader sequence from pre-tRNA to produce the mature 5'-terminus. It can also cleave other RNA substrates such as 4.5S RNA. The protein component plays an auxiliary but essential role in vivo by binding to the 5'-leader sequence and broadening the substrate specificity of the ribozyme. The chain is Ribonuclease P protein component from Salinispora tropica (strain ATCC BAA-916 / DSM 44818 / JCM 13857 / NBRC 105044 / CNB-440).